The primary structure comprises 96 residues: Aspartyl/glutamyl-tRNA(Asn/Gln) amidotransferase subunit C (96 aa).

This sequence belongs to the GatC family. In terms of assembly, heterotrimer of A, B and C subunits.

The enzyme catalyses L-glutamyl-tRNA(Gln) + L-glutamine + ATP + H2O = L-glutaminyl-tRNA(Gln) + L-glutamate + ADP + phosphate + H(+). The catalysed reaction is L-aspartyl-tRNA(Asn) + L-glutamine + ATP + H2O = L-asparaginyl-tRNA(Asn) + L-glutamate + ADP + phosphate + 2 H(+). Its function is as follows. Allows the formation of correctly charged Asn-tRNA(Asn) or Gln-tRNA(Gln) through the transamidation of misacylated Asp-tRNA(Asn) or Glu-tRNA(Gln) in organisms which lack either or both of asparaginyl-tRNA or glutaminyl-tRNA synthetases. The reaction takes place in the presence of glutamine and ATP through an activated phospho-Asp-tRNA(Asn) or phospho-Glu-tRNA(Gln). The chain is Aspartyl/glutamyl-tRNA(Asn/Gln) amidotransferase subunit C from Fusobacterium nucleatum subsp. nucleatum (strain ATCC 25586 / DSM 15643 / BCRC 10681 / CIP 101130 / JCM 8532 / KCTC 2640 / LMG 13131 / VPI 4355).